The chain runs to 112 residues: Replication initiation control protein YabA (112 aa).

Residues histidine 85, cysteine 87, cysteine 101, and cysteine 104 each contribute to the Zn(2+) site.

Belongs to the YabA family. Homotetramer. Interacts with both DnaA and DnaN, acting as a bridge between these two proteins. Zn(2+) serves as cofactor.

Its subcellular location is the cytoplasm. It localises to the nucleoid. Functionally, involved in control of chromosome replication initiation. Inhibits the cooperative binding of DnaA to the oriC region, thus negatively regulating initiation of chromosome replication. Inhibits the ability of DnaA-ATP to form a helix on DNA; does not disassemble preformed DnaA-DNA helices. Decreases the residence time of DnaA on the chromosome at its binding sites (oriC, replication forks and promoter-binding sites). Tethers DnaA to the replication machinery via the DNA polymerase beta sliding clamp subunit (dnaN). Associates with oriC and other DnaA targets on the chromosome in a DnaA-dependent manner. In Lacticaseibacillus casei (strain BL23) (Lactobacillus casei), this protein is Replication initiation control protein YabA.